The sequence spans 979 residues: Collagen alpha-2(I) chain (979 aa).

Residues 1–979 (SGGFDFSFLP…FGYEGDFYRA (979 aa)) are disordered. 4-hydroxyproline occurs at positions 10, 13, 38, and 44. Positions 24-70 (LGPGPMGLMGPRGPPGASGAPGPQGFQGPAGEPGEPGQTGPAGARGP) are enriched in low complexity. The residue at position 99 (lysine 99) is a 5-hydroxylysine; alternate. Lysine 99 carries an O-linked (Gal...) hydroxylysine; alternate glycan. Composition is skewed to low complexity over residues 147–176 (VGAPGPAGARGSDGSVGPVGPAGPIGSAGP), 222–263 (PGAN…AGSK), 272–282 (SAGPQGPPGSS), and 312–331 (RAGVIGPAGARGASGPAGVR). 4-hydroxyproline is present on residues proline 334 and proline 337. Residues 363 to 382 (LPGIDGRPGPIGPAGARGEA) show a composition bias toward low complexity. Positions 427–436 (GVQGGKGEQG) are enriched in gly residues. The span at 483-500 (PGESGAVGPSGAIGSRGP) shows a compositional bias: low complexity. The span at 517 to 527 (GAPGGSGGLPG) shows a compositional bias: gly residues. Composition is skewed to low complexity over residues 550 to 594 (VGTT…PRGS) and 601 to 621 (VGPAGPNGFAGPAGAAGQPGA). A compositionally biased stretch (basic and acidic residues) spans 622-631 (KGERGTKGPK). Positions 639 to 649 (PTGPVGSAGPA) are enriched in low complexity. The span at 659-668 (GSRGDGGPPG) shows a compositional bias: gly residues. Positions 669-679 (ATGFPGAAGRT) are enriched in low complexity. Gly residues predominate over residues 710–724 (GPVGRGETGAGGPPG). Composition is skewed to low complexity over residues 725–759 (FTGEKGPSGEPGTAGPPGTAGPQGLLGAPGILGLP) and 767–777 (LPGVAGAVGEP). The span at 778–788 (GPLGIGPPGAR) shows a compositional bias: gly residues. A compositionally biased stretch (low complexity) spans 840-855 (EPGPVGSVGPVGALGP). Residues 865-876 (RGDKGEPGDKGP) show a composition bias toward basic and acidic residues. Pro residues predominate over residues 949-961 (SGPPGPPGPPGPP).

The protein belongs to the fibrillar collagen family. In terms of assembly, trimers of one alpha 2(I) and two alpha 1(I) chains. Interacts (via C-terminus) with TMEM131 (via PapD-L domain); the interaction is direct and is involved in assembly and TRAPPIII ER-to-Golgi transport complex-dependent secretion of collagen. In terms of processing, prolines at the third position of the tripeptide repeating unit (G-X-Y) are hydroxylated in some or all of the chains. Expressed in bones.

It localises to the secreted. Its subcellular location is the extracellular space. It is found in the extracellular matrix. Its function is as follows. Type I collagen is a member of group I collagen (fibrillar forming collagen). This chain is Collagen alpha-2(I) chain, found in Bradypus variegatus (Brown-throated three-fingered sloth).